A 631-amino-acid polypeptide reads, in one-letter code: tRNA uridine 5-carboxymethylaminomethyl modification enzyme MnmG (631 aa).

FAD contacts are provided by residues 15 to 20, isoleucine 127, and serine 182; that span reads GAGHAG. 276-290 lines the NAD(+) pocket; sequence GPRYCPSIEDKIVRF. Glutamine 373 contacts FAD.

It belongs to the MnmG family. Homodimer. Heterotetramer of two MnmE and two MnmG subunits. It depends on FAD as a cofactor.

It is found in the cytoplasm. NAD-binding protein involved in the addition of a carboxymethylaminomethyl (cmnm) group at the wobble position (U34) of certain tRNAs, forming tRNA-cmnm(5)s(2)U34. This Streptococcus mutans serotype c (strain ATCC 700610 / UA159) protein is tRNA uridine 5-carboxymethylaminomethyl modification enzyme MnmG.